Reading from the N-terminus, the 984-residue chain is Probable translation initiation factor IF-2 (984 aa).

The DOD-type homing endonuclease domain occupies 94 to 215; the sequence is VNGWYSVTVT…LPLLLLRFGI (122 aa). In terms of domain architecture, tr-type G spans 391 to 608; the sequence is TTETHNFVAN…LIAGLSQKYL (218 aa). Residues 464–468 and 518–521 contribute to the GTP site; these read DTPGH and NKID.

The protein belongs to the TRAFAC class translation factor GTPase superfamily. Classic translation factor GTPase family. IF-2 subfamily. In terms of processing, this protein undergoes a protein self splicing that involves a post-translational excision of the intervening region (intein) followed by peptide ligation.

Function in general translation initiation by promoting the binding of the formylmethionine-tRNA to ribosomes. Seems to function along with eIF-2. The protein is Probable translation initiation factor IF-2 (infB) of Pyrococcus furiosus (strain ATCC 43587 / DSM 3638 / JCM 8422 / Vc1).